The sequence spans 124 residues: UPF0342 protein DSY2926 (124 aa).

Belongs to the UPF0342 family.

The sequence is that of UPF0342 protein DSY2926 from Desulfitobacterium hafniense (strain Y51).